The chain runs to 484 residues: ATP synthase subunit beta (484 aa).

Residue 168–175 (GGAGVGKT) coordinates ATP.

The protein belongs to the ATPase alpha/beta chains family. As to quaternary structure, F-type ATPases have 2 components, CF(1) - the catalytic core - and CF(0) - the membrane proton channel. CF(1) has five subunits: alpha(3), beta(3), gamma(1), delta(1), epsilon(1). CF(0) has three main subunits: a(1), b(2) and c(9-12). The alpha and beta chains form an alternating ring which encloses part of the gamma chain. CF(1) is attached to CF(0) by a central stalk formed by the gamma and epsilon chains, while a peripheral stalk is formed by the delta and b chains.

Its subcellular location is the cell membrane. The catalysed reaction is ATP + H2O + 4 H(+)(in) = ADP + phosphate + 5 H(+)(out). In terms of biological role, produces ATP from ADP in the presence of a proton gradient across the membrane. The catalytic sites are hosted primarily by the beta subunits. This Arthrobacter sp. (strain FB24) protein is ATP synthase subunit beta.